The following is a 178-amino-acid chain: Arginine repressor (178 aa).

A disordered region spans residues 1–21 (MSQAQENEHAGPAVPQTRTAR).

It belongs to the ArgR family.

Its subcellular location is the cytoplasm. The protein operates within amino-acid biosynthesis; L-arginine biosynthesis [regulation]. In terms of biological role, regulates arginine biosynthesis genes. This Streptomyces avermitilis (strain ATCC 31267 / DSM 46492 / JCM 5070 / NBRC 14893 / NCIMB 12804 / NRRL 8165 / MA-4680) protein is Arginine repressor.